A 470-amino-acid chain; its full sequence is Ribulose bisphosphate carboxylase large chain (470 aa).

Lys5 is subject to N6,N6,N6-trimethyllysine. Positions 114 and 164 each coordinate substrate. The active-site Proton acceptor is Lys166. Substrate is bound at residue Lys168. Residues Lys192, Asp194, and Glu195 each coordinate Mg(2+). Residue Lys192 is modified to N6-carboxylysine. The active-site Proton acceptor is His285. Residues Arg286, His318, and Ser370 each contribute to the substrate site.

Belongs to the RuBisCO large chain family. Type I subfamily. Heterohexadecamer of 8 large chains and 8 small chains; disulfide-linked. The disulfide link is formed within the large subunit homodimers. Mg(2+) is required as a cofactor. In terms of processing, the disulfide bond which can form in the large chain dimeric partners within the hexadecamer appears to be associated with oxidative stress and protein turnover.

The protein localises to the plastid. It localises to the chloroplast. It carries out the reaction 2 (2R)-3-phosphoglycerate + 2 H(+) = D-ribulose 1,5-bisphosphate + CO2 + H2O. It catalyses the reaction D-ribulose 1,5-bisphosphate + O2 = 2-phosphoglycolate + (2R)-3-phosphoglycerate + 2 H(+). Its function is as follows. RuBisCO catalyzes two reactions: the carboxylation of D-ribulose 1,5-bisphosphate, the primary event in carbon dioxide fixation, as well as the oxidative fragmentation of the pentose substrate in the photorespiration process. Both reactions occur simultaneously and in competition at the same active site. The chain is Ribulose bisphosphate carboxylase large chain from Bertiera breviflora.